Here is a 237-residue protein sequence, read N- to C-terminus: B3 domain-containing protein At1g20600 (237 aa).

A disordered region spans residues 53 to 79; that stretch reads LVSQANQKQSRKREEKTEKNQPKRVKN. A compositionally biased stretch (basic and acidic residues) spans 64-73; the sequence is KREEKTEKNQ. Residues 126 to 230 constitute a DNA-binding region (TF-B3); that stretch reads KKQLMSSDVD…LEHVFIRGSK (105 aa).

It localises to the nucleus. The polypeptide is B3 domain-containing protein At1g20600 (Arabidopsis thaliana (Mouse-ear cress)).